The primary structure comprises 343 residues: Putative MO25-like protein At4g17270 (343 aa).

The protein belongs to the Mo25 family.

This chain is Putative MO25-like protein At4g17270, found in Arabidopsis thaliana (Mouse-ear cress).